The following is a 308-amino-acid chain: Ribosomal RNA small subunit methyltransferase H (308 aa).

Residues 32 to 34, D52, F79, D100, and Q107 contribute to the S-adenosyl-L-methionine site; that span reads AGH.

Belongs to the methyltransferase superfamily. RsmH family.

The protein localises to the cytoplasm. It catalyses the reaction cytidine(1402) in 16S rRNA + S-adenosyl-L-methionine = N(4)-methylcytidine(1402) in 16S rRNA + S-adenosyl-L-homocysteine + H(+). Functionally, specifically methylates the N4 position of cytidine in position 1402 (C1402) of 16S rRNA. In Mycoplasma mycoides subsp. mycoides SC (strain CCUG 32753 / NCTC 10114 / PG1), this protein is Ribosomal RNA small subunit methyltransferase H.